Consider the following 165-residue polypeptide: Lithostathine-1 (165 aa).

A signal peptide spans 1–21 (MARNAYFILLSCLIVLSPSQG). A Pyrrolidone carboxylic acid modification is found at Gln22. Positions 33–163 (ISCPEGSNAY…DAQYSFVCKF (131 aa)) constitute a C-type lectin domain. 3 cysteine pairs are disulfide-bonded: Cys35/Cys46, Cys63/Cys161, and Cys136/Cys153. A glycan (N-linked (GlcNAc...) asparagine) is linked at Asn129.

Expressed only in regenerating islets and normal exocrine pancreas, but not in normal pancreatic islets. Expressed strongly in pancreas, moderately in gall bladder, and weakly in liver.

It localises to the secreted. Might act as an inhibitor of spontaneous calcium carbonate precipitation. This is Lithostathine-1 (Reg1) from Mus musculus (Mouse).